The following is a 334-amino-acid chain: DNA-directed RNA polymerase subunit alpha (334 aa).

An alpha N-terminal domain (alpha-NTD) region spans residues 1-234; sequence MQRSVHELLT…QQLAVFVDFD (234 aa). The segment at 248–334 is alpha C-terminal domain (alpha-CTD); the sequence is IDPILLRPVD…LRGDDRVLGG (87 aa).

The protein belongs to the RNA polymerase alpha chain family. As to quaternary structure, homodimer. The RNAP catalytic core consists of 2 alpha, 1 beta, 1 beta' and 1 omega subunit. When a sigma factor is associated with the core the holoenzyme is formed, which can initiate transcription.

It carries out the reaction RNA(n) + a ribonucleoside 5'-triphosphate = RNA(n+1) + diphosphate. Functionally, DNA-dependent RNA polymerase catalyzes the transcription of DNA into RNA using the four ribonucleoside triphosphates as substrates. This Marinobacter nauticus (strain ATCC 700491 / DSM 11845 / VT8) (Marinobacter aquaeolei) protein is DNA-directed RNA polymerase subunit alpha.